A 502-amino-acid polypeptide reads, in one-letter code: Bone morphogenetic protein receptor type-1B (502 aa).

The N-terminal stretch at 1 to 13 is a signal peptide; the sequence is MLLRSAGKLNVGT. Positions 1 to 25 are disordered; sequence MLLRSAGKLNVGTKKEDGESTAPTP. The Extracellular segment spans residues 14 to 126; sequence KKEDGESTAP…DFVDGPIHHR (113 aa). 5 disulfide bridges follow: C32–C53, C34–C38, C47–C71, C81–C95, and C96–C102. Residues 127–148 form a helical membrane-spanning segment; the sequence is ALLISVTVCSLLLVLIILFCYF. Residues 149 to 502 lie on the Cytoplasmic side of the membrane; sequence RYKRQETRPR…KMSESQDIKL (354 aa). Residues 174 to 203 enclose the GS domain; the sequence is ESLRDLIEQSQSSGSGSGLPLLVQRTIAKQ. The Protein kinase domain maps to 204–494; it reads IQMVKQIGKG…LRVKKTLAKM (291 aa). ATP-binding positions include 210 to 218 and K231; that span reads IGKGRYGEV. Catalysis depends on D332, which acts as the Proton acceptor.

The protein belongs to the protein kinase superfamily. TKL Ser/Thr protein kinase family. TGFB receptor subfamily. Interacts with high affinity with GDF5; positively regulates chondrocyte differentiation. Interacts with SCUBE3. Interacts with TSC22D1/TSC-22. Interacts with TGFBR3. It depends on Mg(2+) as a cofactor. Mn(2+) serves as cofactor. Autophosphorylated.

It is found in the cell membrane. It catalyses the reaction L-threonyl-[receptor-protein] + ATP = O-phospho-L-threonyl-[receptor-protein] + ADP + H(+). The catalysed reaction is L-seryl-[receptor-protein] + ATP = O-phospho-L-seryl-[receptor-protein] + ADP + H(+). In terms of biological role, on ligand binding, forms a receptor complex consisting of two type II and two type I transmembrane serine/threonine kinases. Type II receptors phosphorylate and activate type I receptors which autophosphorylate, then bind and activate SMAD transcriptional regulators. Receptor for BMP7/OP-1 and GDF5. Positively regulates chondrocyte differentiation through GDF5 interaction. The sequence is that of Bone morphogenetic protein receptor type-1B (BMPR1B) from Homo sapiens (Human).